The sequence spans 115 residues: Phosphoribosyl-AMP cyclohydrolase (115 aa).

Residue D80 coordinates Mg(2+). Residue C81 participates in Zn(2+) binding. 2 residues coordinate Mg(2+): D82 and D84. The Zn(2+) site is built by C97 and C104.

Belongs to the PRA-CH family. Homodimer. It depends on Mg(2+) as a cofactor. Requires Zn(2+) as cofactor.

It is found in the cytoplasm. It catalyses the reaction 1-(5-phospho-beta-D-ribosyl)-5'-AMP + H2O = 1-(5-phospho-beta-D-ribosyl)-5-[(5-phospho-beta-D-ribosylamino)methylideneamino]imidazole-4-carboxamide. Its pathway is amino-acid biosynthesis; L-histidine biosynthesis; L-histidine from 5-phospho-alpha-D-ribose 1-diphosphate: step 3/9. Its function is as follows. Catalyzes the hydrolysis of the adenine ring of phosphoribosyl-AMP. This is Phosphoribosyl-AMP cyclohydrolase from Rhodococcus erythropolis (strain PR4 / NBRC 100887).